The chain runs to 228 residues: Potassium/proton antiporter CemA (228 aa).

The next 3 helical transmembrane spans lie at 6-26 (FIPLLYLTSIVFLPWWVSFSF), 113-133 (IICFVILSGYSFLVNEELFIL), and 188-208 (IISGLVSTFPVIFDTIFKYWI).

Belongs to the CemA family.

The protein resides in the plastid. It is found in the chloroplast inner membrane. It carries out the reaction K(+)(in) + H(+)(out) = K(+)(out) + H(+)(in). Contributes to K(+)/H(+) antiport activity by supporting proton efflux to control proton extrusion and homeostasis in chloroplasts in a light-dependent manner to modulate photosynthesis. Prevents excessive induction of non-photochemical quenching (NPQ) under continuous-light conditions. Indirectly promotes efficient inorganic carbon uptake into chloroplasts. In Populus alba (White poplar), this protein is Potassium/proton antiporter CemA.